A 445-amino-acid polypeptide reads, in one-letter code: Ribosomal protein uS12 methylthiotransferase RimO (445 aa).

Residues isoleucine 4–lysine 119 enclose the MTTase N-terminal domain. Cysteine 13, cysteine 48, cysteine 82, cysteine 156, cysteine 160, and cysteine 163 together coordinate [4Fe-4S] cluster. One can recognise a Radical SAM core domain in the interval threonine 142 to aspartate 372. The 67-residue stretch at lysine 375–asparagine 441 folds into the TRAM domain.

Belongs to the methylthiotransferase family. RimO subfamily. The cofactor is [4Fe-4S] cluster.

It is found in the cytoplasm. It catalyses the reaction L-aspartate(89)-[ribosomal protein uS12]-hydrogen + (sulfur carrier)-SH + AH2 + 2 S-adenosyl-L-methionine = 3-methylsulfanyl-L-aspartate(89)-[ribosomal protein uS12]-hydrogen + (sulfur carrier)-H + 5'-deoxyadenosine + L-methionine + A + S-adenosyl-L-homocysteine + 2 H(+). Catalyzes the methylthiolation of an aspartic acid residue of ribosomal protein uS12. This is Ribosomal protein uS12 methylthiotransferase RimO from Clostridium botulinum (strain Langeland / NCTC 10281 / Type F).